A 184-amino-acid polypeptide reads, in one-letter code: uncharacterized protein (184 aa).

The segment at 146 to 177 (HPKTSLAQQPNAKATQPPLSKETLNTAKETDP) is disordered. Polar residues predominate over residues 150–172 (SLAQQPNAKATQPPLSKETLNTA).

This is an uncharacterized protein from Picosynechococcus sp. (strain ATCC 27264 / PCC 7002 / PR-6) (Agmenellum quadruplicatum).